Here is a 535-residue protein sequence, read N- to C-terminus: Solute carrier family 22 member 7 (535 aa).

A run of 12 helical transmembrane segments spans residues 21–41, 144–164, 178–198, 202–222, 232–252, 257–277, 344–364, 375–395, 402–422, 429–449, 464–484, and 489–509; these read LVLMALPRMLLPMHFLLPVFM, ITSTCFFIGVLVGAVVYGYLS, VSSLVLGLMSAASINYIMFVV, LTGSALAGFTIIVLPLELEWL, VISTVFWSGGVLLLALVGYLI, WLLLAATLPCVPGIISIWWVP, ISLCCMMVWFGVNFSYYGLTL, QTQLLFGAVELPSKIMVYFLV, LTEAGMLLGAALTFGTSLLVS, ITALVVVGKAFSEAAFTTAYL, LGLTALMGRLGASLAPLAALL, and LLLPKVAYGGIALVAACTALL.

It belongs to the major facilitator (TC 2.A.1) superfamily. Organic cation transporter (TC 2.A.1.19) family. As to expression, expressed in liver and kidney. Expressed at low levels in adipose tissue. Expressed in fetal liver. In kidney, expressed at the brush border of the proximal tubule S3 segment (S3) in the outer stripe and medullary rays. In kidney, expression is higher in female than male.

Its subcellular location is the basolateral cell membrane. The protein localises to the apical cell membrane. It localises to the cell membrane. The enzyme catalyses orotate(out) + L-glutamate(in) = orotate(in) + L-glutamate(out). It catalyses the reaction 3',5'-cyclic GMP(in) = 3',5'-cyclic GMP(out). The catalysed reaction is GMP(in) = GMP(out). It carries out the reaction 2'-deoxyguanosine(in) = 2'-deoxyguanosine(out). The enzyme catalyses GDP(in) = GDP(out). It catalyses the reaction guanosine(in) = guanosine(out). The catalysed reaction is GTP(in) = GTP(out). It carries out the reaction 3',5'-cyclic AMP(in) = 3',5'-cyclic AMP(out). The enzyme catalyses creatinine(in) = creatinine(out). It catalyses the reaction prostaglandin E2(out) = prostaglandin E2(in). The catalysed reaction is 2-oxoglutarate(in) = 2-oxoglutarate(out). It carries out the reaction glutarate(in) = glutarate(out). The enzyme catalyses urate(out) = urate(in). It catalyses the reaction estrone 3-sulfate(out) = estrone 3-sulfate(in). Functions as a Na(+)-independent bidirectional multispecific transporter. Contributes to the renal and hepatic elimination of endogenous organic compounds from the systemic circulation into the urine and bile, respectively. Capable of transporting a wide range of purine and pyrimidine nucleobases, nucleosides, and nucleotides with cGMP, 2'deoxyguanosine and GMP being the preferred substrates. Functions as a pH- and chloride-independent cGMP bidirectional facilitative transporter that can regulate both intracellular and extracellular levels of cGMP and may be involved in cGMP signaling pathways. Mediates orotate/glutamate bidirectional exchange and most likely display a physiological role in hepatic release of glutamate into the blood. Involved in renal secretion and possible reabsorption of creatinine. Able to uptake prostaglandin E2 (PGE2) and may contribute to PGE2 renal excretion. Also transports alpha-ketoglutarate and urate. Apart from the orotate/glutamate exchange, the counterions for the uptake of other SLC22A7/OAT2 substrates remain to be identified. The sequence is that of Solute carrier family 22 member 7 from Rattus norvegicus (Rat).